A 425-amino-acid chain; its full sequence is Serine hydroxymethyltransferase (425 aa).

A (6S)-5,6,7,8-tetrahydrofolate-binding site is contributed by 132-134 (GHL). Residue Lys-237 is modified to N6-(pyridoxal phosphate)lysine.

It belongs to the SHMT family. As to quaternary structure, homodimer. Pyridoxal 5'-phosphate is required as a cofactor.

Its subcellular location is the cytoplasm. It carries out the reaction (6R)-5,10-methylene-5,6,7,8-tetrahydrofolate + glycine + H2O = (6S)-5,6,7,8-tetrahydrofolate + L-serine. The protein operates within one-carbon metabolism; tetrahydrofolate interconversion. It participates in amino-acid biosynthesis; glycine biosynthesis; glycine from L-serine: step 1/1. Catalyzes the reversible interconversion of serine and glycine with tetrahydrofolate (THF) serving as the one-carbon carrier. This reaction serves as the major source of one-carbon groups required for the biosynthesis of purines, thymidylate, methionine, and other important biomolecules. Also exhibits THF-independent aldolase activity toward beta-hydroxyamino acids, producing glycine and aldehydes, via a retro-aldol mechanism. In Wolbachia sp. subsp. Brugia malayi (strain TRS), this protein is Serine hydroxymethyltransferase.